Here is a 418-residue protein sequence, read N- to C-terminus: Metacaspase-2 (418 aa).

The interval 68-113 (PSPYTHAPHAPSPFNHAPPDSYPFTHAPPASSPFNHAPPGPPPPVH) is disordered. The span at 70–80 (PYTHAPHAPSP) shows a compositional bias: low complexity. Pro residues predominate over residues 103 to 112 (HAPPGPPPPV). Catalysis depends on residues H200 and C256. The disordered stretch occupies residues 385-406 (PDEEEEVNQAPQKTQEPQLSAN). Positions 393 to 405 (QAPQKTQEPQLSA) are enriched in polar residues.

The protein belongs to the peptidase C14B family.

In terms of biological role, acts as a negative regulator of oxidative stress cell death and hypersensitive cell death response mediated by immune response. Acts via indirect or direct regulation of AMC1 at postranscriptional level. The protein is Metacaspase-2 (AMC2) of Arabidopsis thaliana (Mouse-ear cress).